Here is a 592-residue protein sequence, read N- to C-terminus: RNA-binding protein 47 (592 aa).

Residues 1–24 (MTAEDAAAAMSSDSAAGGAASAKA) are compositionally biased toward low complexity. The disordered stretch occupies residues 1 to 26 (MTAEDAAAAMSSDSAAGGAASAKAPE). 3 consecutive RRM domains span residues 73–151 (CEVF…CSVD), 153–235 (CRLF…WAEP), and 248–320 (KILY…LAKP). Asymmetric dimethylarginine; alternate is present on residues Arg397 and Arg408. Residues Arg397 and Arg408 each carry the omega-N-methylarginine; alternate modification.

This sequence belongs to the RRM RBM47 family. Homodimer. Interacts with A1CF. Interacts with APOBEC1; form an mRNA editing complex. Interacts with RBPMS.

The protein localises to the nucleus. It is found in the cytoplasm. Its function is as follows. Single-stranded RNA-binding protein that functions in a variety of RNA processes, including alternative splicing, RNA stabilization, and RNA editing. Functions as an enzyme-substrate adapter for the cytidine deaminase APOBEC1. With APOBEC1 forms an mRNA editing complex involved into cytidine to uridine editing of a variety of mRNA molecules. Through the binding of their 3'UTR, also stabilizes a variety of mRNAs and regulates the expression of genes such as the interferon alpha/beta receptor and interleukin-10. Also involved in the alternative splicing of several genes including TJP1. Binds the pre-mRNA (U)GCAUG consensus sequences in downstream intronic regions of alternative exons, regulating their exclusion and inclusion into mRNAs. Independently of its RNA-binding activity, could negatively regulate MAVS by promoting its lysosomal degradation. This Canis lupus familiaris (Dog) protein is RNA-binding protein 47.